The following is a 59-amino-acid chain: Large ribosomal subunit protein uL30 (59 aa).

Belongs to the universal ribosomal protein uL30 family. Part of the 50S ribosomal subunit.

The chain is Large ribosomal subunit protein uL30 from Shewanella amazonensis (strain ATCC BAA-1098 / SB2B).